The sequence spans 242 residues: ATP-dependent dethiobiotin synthetase BioD (242 aa).

15–20 (DVGKTV) serves as a coordination point for ATP. Thr-19 is a Mg(2+) binding site. Lys-40 is a catalytic residue. Residue Ser-44 participates in substrate binding. Glu-117 is a binding site for Mg(2+). ATP-binding positions include 117–120 (EGAG), 178–179 (NQ), and 208–210 (PYS).

It belongs to the dethiobiotin synthetase family. As to quaternary structure, homodimer. Mg(2+) serves as cofactor.

It is found in the cytoplasm. The enzyme catalyses (7R,8S)-7,8-diammoniononanoate + CO2 + ATP = (4R,5S)-dethiobiotin + ADP + phosphate + 3 H(+). It functions in the pathway cofactor biosynthesis; biotin biosynthesis; biotin from 7,8-diaminononanoate: step 1/2. In terms of biological role, catalyzes a mechanistically unusual reaction, the ATP-dependent insertion of CO2 between the N7 and N8 nitrogen atoms of 7,8-diaminopelargonic acid (DAPA, also called 7,8-diammoniononanoate) to form a ureido ring. In Halalkalibacterium halodurans (strain ATCC BAA-125 / DSM 18197 / FERM 7344 / JCM 9153 / C-125) (Bacillus halodurans), this protein is ATP-dependent dethiobiotin synthetase BioD.